The sequence spans 193 residues: dCTP deaminase, dUMP-forming (193 aa).

DCTP contacts are provided by residues 101–106 (KSSLGR), Asp-119, 127–129 (TLE), Gln-148, Tyr-162, and Gln-174. Glu-129 (proton donor/acceptor) is an active-site residue. The disordered stretch occupies residues 161 to 184 (PYGSETTGSHYQGQRGPTPSRSYQ).

The protein belongs to the dCTP deaminase family. In terms of assembly, homotrimer.

It carries out the reaction dCTP + 2 H2O = dUMP + NH4(+) + diphosphate. It functions in the pathway pyrimidine metabolism; dUMP biosynthesis; dUMP from dCTP: step 1/1. Functionally, bifunctional enzyme that catalyzes both the deamination of dCTP to dUTP and the hydrolysis of dUTP to dUMP without releasing the toxic dUTP intermediate. The chain is dCTP deaminase, dUMP-forming from Bifidobacterium animalis subsp. lactis (strain AD011).